Consider the following 344-residue polypeptide: Anthranilate phosphoribosyltransferase (344 aa).

5-phospho-alpha-D-ribose 1-diphosphate contacts are provided by residues Gly-86, 89–90, Thr-94, 96–99, 114–122, and Ser-126; these read GD, NIST, and KHGNKSASG. Position 86 (Gly-86) interacts with anthranilate. Residue Ser-98 participates in Mg(2+) binding. Asn-117 lines the anthranilate pocket. Arg-172 is a binding site for anthranilate. Mg(2+)-binding residues include Asp-231 and Glu-232.

Belongs to the anthranilate phosphoribosyltransferase family. In terms of assembly, homodimer. It depends on Mg(2+) as a cofactor.

It carries out the reaction N-(5-phospho-beta-D-ribosyl)anthranilate + diphosphate = 5-phospho-alpha-D-ribose 1-diphosphate + anthranilate. It participates in amino-acid biosynthesis; L-tryptophan biosynthesis; L-tryptophan from chorismate: step 2/5. In terms of biological role, catalyzes the transfer of the phosphoribosyl group of 5-phosphorylribose-1-pyrophosphate (PRPP) to anthranilate to yield N-(5'-phosphoribosyl)-anthranilate (PRA). The protein is Anthranilate phosphoribosyltransferase of Prochlorococcus marinus (strain AS9601).